The sequence spans 244 residues: Probable 2-phosphosulfolactate phosphatase (244 aa).

It belongs to the ComB family. It depends on Mg(2+) as a cofactor.

The catalysed reaction is (2R)-O-phospho-3-sulfolactate + H2O = (2R)-3-sulfolactate + phosphate. The sequence is that of Probable 2-phosphosulfolactate phosphatase from Thermosynechococcus vestitus (strain NIES-2133 / IAM M-273 / BP-1).